A 271-amino-acid polypeptide reads, in one-letter code: Phosphatidylglycerol--prolipoprotein diacylglyceryl transferase (271 aa).

4 helical membrane passes run 18–38, 51–71, 89–109, and 115–135; these read LSVH…LWMA, IFID…RAYY, IWKG…TGIV, and GISF…GQAI. An a 1,2-diacyl-sn-glycero-3-phospho-(1'-sn-glycerol)-binding site is contributed by R137. 3 consecutive transmembrane segments (helical) span residues 177 to 197, 205 to 225, and 236 to 256; these read HPTF…LLLL, GNLF…IEGM, and LRIA…LMIF.

It belongs to the Lgt family.

The protein resides in the cell membrane. The enzyme catalyses L-cysteinyl-[prolipoprotein] + a 1,2-diacyl-sn-glycero-3-phospho-(1'-sn-glycerol) = an S-1,2-diacyl-sn-glyceryl-L-cysteinyl-[prolipoprotein] + sn-glycerol 1-phosphate + H(+). The protein operates within protein modification; lipoprotein biosynthesis (diacylglyceryl transfer). Functionally, catalyzes the transfer of the diacylglyceryl group from phosphatidylglycerol to the sulfhydryl group of the N-terminal cysteine of a prolipoprotein, the first step in the formation of mature lipoproteins. The polypeptide is Phosphatidylglycerol--prolipoprotein diacylglyceryl transferase (Bacillus velezensis (strain DSM 23117 / BGSC 10A6 / LMG 26770 / FZB42) (Bacillus amyloliquefaciens subsp. plantarum)).